The sequence spans 406 residues: Glycosyltransferase GlyE (406 aa).

A GT8 domain region spans residues 3–265 (NTKRAVVFAG…SVILNEWFSK (263 aa)). UDP is bound by residues 11–16 (AGDYAY) and 106–107 (DS). Positions 106, 108, and 227 each coordinate Mn(2+). 227–233 (HYISQDK) is a binding site for UDP.

The protein in the N-terminal section; belongs to the glycosyltransferase 8 family. Mn(2+) serves as cofactor.

It functions in the pathway protein modification; protein glycosylation. Involved in the polymorphic O-glycosylation of the serine-rich repeat protein PsrP. Catalyzes the third step in glycosylation of PsrP in this bacteria. Transfers galactose from UDP-galactose to the terminal glucose moiety of already-glycosylated PsrP (using the short substrate PsrP-GlcNAc-Glc). Has a very marked preference for PsrP substrate that has already been modified by GlcNAc and glucose. Has hydrolytic activity against UDP-galactose but none against UDP-glucose. In terms of biological role, also catalyzes the fourth step in glycosylation of PsrP in this bacteria. Can transfer the sugar from UDP-galactose to the terminal sugar moiety of PsrP-GlcNAc-Glc-Glc and of PsrP-GlcNAc-Glc-Gal. The protein is Glycosyltransferase GlyE of Streptococcus pneumoniae serotype 4 (strain ATCC BAA-334 / TIGR4).